Here is a 643-residue protein sequence, read N- to C-terminus: Threonine--tRNA ligase (643 aa).

The 61-residue stretch at 1–61 (MPIITLPDGS…TEDSKLEIIT (61 aa)) folds into the TGS domain. A catalytic region spans residues 243-534 (DHRKIGKALD…ITEEYAGFFP (292 aa)). Residues Cys-334, His-385, and His-511 each contribute to the Zn(2+) site.

It belongs to the class-II aminoacyl-tRNA synthetase family. In terms of assembly, homodimer. Requires Zn(2+) as cofactor.

It localises to the cytoplasm. The enzyme catalyses tRNA(Thr) + L-threonine + ATP = L-threonyl-tRNA(Thr) + AMP + diphosphate + H(+). Functionally, catalyzes the attachment of threonine to tRNA(Thr) in a two-step reaction: L-threonine is first activated by ATP to form Thr-AMP and then transferred to the acceptor end of tRNA(Thr). Also edits incorrectly charged L-seryl-tRNA(Thr). In Pasteurella multocida (strain Pm70), this protein is Threonine--tRNA ligase.